The chain runs to 465 residues: Paired box protein Pax-8 (465 aa).

Residues 26 to 152 constitute a DNA-binding region (paired); that stretch reads GHGGLNQLGG…SSINRIIRTK (127 aa). Positions 29 to 85 are PAI subdomain; that stretch reads GLNQLGGAFVNGRPLPEVVRQRIVDLAHQGVRPCDISRQLRVSHGCVSKILGRYYET. An RED subdomain region spans residues 104 to 152; it reads KVVEKIGDYKRQNPTMFAWEIRDRLLTDGVCDNDTVPSVSSINRIIRTK. The tract at residues 206–227 is disordered; the sequence is PSADGKRKLDDSDQESCRLSID.

As to expression, expression starts at late gastrula stages in cells fated to become the primordia of the otic system and the pronephric kidney. Expression is maintained in these two structures through late tailbud stages. Does not appear to be expressed in the thyroid gland.

It localises to the nucleus. Functionally, probable transcription factor. Involved in kidney development, acting synergistically with lhx1/lim-1 to establish the pronephric primordium in late gastrulae/early neurulae. In Xenopus laevis (African clawed frog), this protein is Paired box protein Pax-8.